Consider the following 291-residue polypeptide: Probable aquaporin PIP2-4 (291 aa).

Met-1 is modified (N-acetylmethionine). The interval 1-22 (MAKDLDVNESGPPAARDYKDPP) is disordered. Ala-2 is subject to N-acetylalanine; in Probable aquaporin PIP2-4, N-terminally processed. Residues 2 to 39 (AKDLDVNESGPPAARDYKDPPPAPFFDMEELRKWPLYR) are Cytoplasmic-facing. The residue at position 3 (Lys-3) is an N6,N6-dimethyllysine. The chain crosses the membrane as a helical span at residues 40–60 (AVIAEFVATLLFLYVSILTVI). Over 61–74 (GYKAQTDATAGGVD) the chain is Extracellular. The chain crosses the membrane as a helical span at residues 75–95 (CGGVGILGIAWAFGGMIFVLV). Residues 96–125 (YCTAGISGGHINPAVTVGLFLARKVSLVRT) are Cytoplasmic-facing. The short motif at 107–109 (NPA) is the NPA 1 element. A helical transmembrane segment spans residues 126–146 (VLYIVAQCLGAICGCGFVKAF). Residues 147-167 (QSSYYTRYGGGANELADGYNK) are Extracellular-facing. A helical transmembrane segment spans residues 168–188 (GTGLGAEIIGTFVLVYTVFSA). At 189–201 (TDPKRNARDSHVP) the chain is on the cytoplasmic side. Residues 202–222 (VLAPLPIGFAVFMVHLATIPI) traverse the membrane as a helical segment. The Extracellular segment spans residues 223-249 (TGTGINPARSFGAAVIYNNEKAWDDQW). Positions 228 to 230 (NPA) match the NPA 2 motif. The helical transmembrane segment at 250–270 (IFWVGPMIGAAAAAFYHQFIL) threads the bilayer. Over 271–291 (RAAAIKALGSFGSFGSFRSFA) the chain is Cytoplasmic. A phosphoserine mark is found at Ser-283, Ser-286, and Ser-289.

It belongs to the MIP/aquaporin (TC 1.A.8) family. PIP (TC 1.A.8.11) subfamily. Expressed in roots.

The protein resides in the cell membrane. Aquaporins facilitate the transport of water and small neutral solutes across cell membranes. The sequence is that of Probable aquaporin PIP2-4 (PIP2-4) from Arabidopsis thaliana (Mouse-ear cress).